Reading from the N-terminus, the 469-residue chain is 3-isopropylmalate dehydratase large subunit (469 aa).

The [4Fe-4S] cluster site is built by C347, C408, and C411.

This sequence belongs to the aconitase/IPM isomerase family. LeuC type 1 subfamily. In terms of assembly, heterodimer of LeuC and LeuD. The cofactor is [4Fe-4S] cluster.

The enzyme catalyses (2R,3S)-3-isopropylmalate = (2S)-2-isopropylmalate. Its pathway is amino-acid biosynthesis; L-leucine biosynthesis; L-leucine from 3-methyl-2-oxobutanoate: step 2/4. In terms of biological role, catalyzes the isomerization between 2-isopropylmalate and 3-isopropylmalate, via the formation of 2-isopropylmaleate. In Actinobacillus pleuropneumoniae serotype 5b (strain L20), this protein is 3-isopropylmalate dehydratase large subunit.